Here is a 145-residue protein sequence, read N- to C-terminus: Large ribosomal subunit protein uL13 (145 aa).

This sequence belongs to the universal ribosomal protein uL13 family. Part of the 50S ribosomal subunit.

In terms of biological role, this protein is one of the early assembly proteins of the 50S ribosomal subunit, although it is not seen to bind rRNA by itself. It is important during the early stages of 50S assembly. This is Large ribosomal subunit protein uL13 from Bacillus thuringiensis (strain Al Hakam).